The sequence spans 287 residues: Phosphatidylglycerol--prolipoprotein diacylglyceryl transferase (287 aa).

4 consecutive transmembrane segments (helical) span residues 15-35, 55-75, 90-110, and 117-137; these read IGPL…ILAI, FVMF…VFFE, IWEG…TAIV, and VSFW…QAIG. Residue Arg138 participates in a 1,2-diacyl-sn-glycero-3-phospho-(1'-sn-glycerol) binding. 2 consecutive transmembrane segments (helical) span residues 180–200 and 238–258; these read HPTF…LLLL and IIRT…IFII.

Belongs to the Lgt family.

The protein localises to the cell membrane. It catalyses the reaction L-cysteinyl-[prolipoprotein] + a 1,2-diacyl-sn-glycero-3-phospho-(1'-sn-glycerol) = an S-1,2-diacyl-sn-glyceryl-L-cysteinyl-[prolipoprotein] + sn-glycerol 1-phosphate + H(+). It functions in the pathway protein modification; lipoprotein biosynthesis (diacylglyceryl transfer). Functionally, catalyzes the transfer of the diacylglyceryl group from phosphatidylglycerol to the sulfhydryl group of the N-terminal cysteine of a prolipoprotein, the first step in the formation of mature lipoproteins. This Oceanobacillus iheyensis (strain DSM 14371 / CIP 107618 / JCM 11309 / KCTC 3954 / HTE831) protein is Phosphatidylglycerol--prolipoprotein diacylglyceryl transferase.